We begin with the raw amino-acid sequence, 344 residues long: Coproporphyrin III ferrochelatase (344 aa).

Residue serine 52 participates in Fe-coproporphyrin III binding. Cysteine 113 provides a ligand contact to [2Fe-2S] cluster. A Fe-coproporphyrin III-binding site is contributed by tyrosine 116. Fe(2+) is bound by residues histidine 172 and glutamate 255. 3 residues coordinate [2Fe-2S] cluster: cysteine 316, cysteine 325, and cysteine 330.

It belongs to the ferrochelatase family. Requires [2Fe-2S] cluster as cofactor.

The protein resides in the cytoplasm. The enzyme catalyses Fe-coproporphyrin III + 2 H(+) = coproporphyrin III + Fe(2+). The protein operates within porphyrin-containing compound metabolism; protoheme biosynthesis. Its function is as follows. Involved in coproporphyrin-dependent heme b biosynthesis. Catalyzes the insertion of ferrous iron into coproporphyrin III to form Fe-coproporphyrin III. The sequence is that of Coproporphyrin III ferrochelatase from Mycobacterium bovis (strain ATCC BAA-935 / AF2122/97).